We begin with the raw amino-acid sequence, 346 residues long: Glucose-6-phosphatase 3 (346 aa).

The Lumenal segment spans residues methionine 1–asparagine 24. Residues valine 25–alanine 45 form a helical membrane-spanning segment. Over alanine 46–glycine 54 the chain is Cytoplasmic. A helical membrane pass occupies residues isoleucine 55 to leucine 75. Residues phenylalanine 76–histidine 114 are Lumenal-facing. Arginine 79 serves as a coordination point for substrate. Histidine 114 serves as the catalytic Proton donor. A helical membrane pass occupies residues cysteine 115 to threonine 135. At arginine 136–proline 146 the chain is on the cytoplasmic side. A helical membrane pass occupies residues serine 147–isoleucine 164. Residue arginine 161 participates in substrate binding. Over leucine 165–proline 169 the chain is Lumenal. The Nucleophile role is filled by histidine 167. Residues histidine 170–methionine 186 form a helical membrane-spanning segment. The Cytoplasmic segment spans residues threonine 187–serine 197. The helical transmembrane segment at phenylalanine 198–phenylalanine 218 threads the bilayer. Residues threonine 219–aspartate 254 are Lumenal-facing. A helical transmembrane segment spans residues serine 255 to valine 273. The Cytoplasmic segment spans residues arginine 274–lysine 283. Residues isoleucine 284 to proline 304 form a helical membrane-spanning segment. Topologically, residues glutamine 305–serine 307 are lumenal. The helical transmembrane segment at leucine 308–valine 328 threads the bilayer. Residues proline 329–serine 346 lie on the Cytoplasmic side of the membrane.

This sequence belongs to the glucose-6-phosphatase family. Ubiquitously expressed. Highly expressed in skeletal muscle, at intermediate levels in heart, brain, placenta, kidney, colon, thymus, spleen and pancreas. Also detected in testis, prostate, ovary, liver, lung, small intestine and peripheral blood lymphocytes.

The protein resides in the endoplasmic reticulum membrane. It carries out the reaction D-glucose 6-phosphate + H2O = D-glucose + phosphate. Its pathway is carbohydrate biosynthesis; gluconeogenesis. Inhibited by vanadate. Its function is as follows. Hydrolyzes glucose-6-phosphate to glucose in the endoplasmic reticulum. May form with the glucose-6-phosphate transporter (SLC37A4/G6PT) a ubiquitously expressed complex responsible for glucose production through glycogenolysis and gluconeogenesis. Probably required for normal neutrophil function. The chain is Glucose-6-phosphatase 3 (G6PC3) from Homo sapiens (Human).